A 270-amino-acid chain; its full sequence is Phosphate import ATP-binding protein PstB 1 (270 aa).

An ABC transporter domain is found at 24–265; it reads LAVERLNLFY…PYQRQTEDYI (242 aa). 56 to 63 lines the ATP pocket; the sequence is GPSGCGKS.

Belongs to the ABC transporter superfamily. Phosphate importer (TC 3.A.1.7) family. As to quaternary structure, the complex is composed of two ATP-binding proteins (PstB), two transmembrane proteins (PstC and PstA) and a solute-binding protein (PstS).

The protein resides in the cell inner membrane. The enzyme catalyses phosphate(out) + ATP + H2O = ADP + 2 phosphate(in) + H(+). Its function is as follows. Part of the ABC transporter complex PstSACB involved in phosphate import. Responsible for energy coupling to the transport system. The protein is Phosphate import ATP-binding protein PstB 1 of Yersinia pestis bv. Antiqua (strain Antiqua).